Consider the following 409-residue polypeptide: Elongation factor Tu, chloroplastic (409 aa).

Positions 10–214 (KPHVNIGTIG…AVDEYIPTPE (205 aa)) constitute a tr-type G domain. A G1 region spans residues 19-26 (GHVDHGKT). 19-26 (GHVDHGKT) contacts GTP. Residue Thr-26 participates in Mg(2+) binding. Positions 60–64 (GITIN) are G2. The G3 stretch occupies residues 81-84 (DCPG). GTP-binding positions include 81–85 (DCPGH) and 136–139 (NKED). A G4 region spans residues 136-139 (NKED). The tract at residues 174–176 (SAL) is G5.

This sequence belongs to the TRAFAC class translation factor GTPase superfamily. Classic translation factor GTPase family. EF-Tu/EF-1A subfamily.

It localises to the plastid. The protein resides in the chloroplast. It catalyses the reaction GTP + H2O = GDP + phosphate + H(+). Functionally, GTP hydrolase that promotes the GTP-dependent binding of aminoacyl-tRNA to the A-site of ribosomes during protein biosynthesis. The polypeptide is Elongation factor Tu, chloroplastic (tufA) (Trieres chinensis (Marine centric diatom)).